We begin with the raw amino-acid sequence, 488 residues long: Transmembrane protein 39A (488 aa).

N-linked (GlcNAc...) asparagine glycosylation is found at N31 and N39. 8 helical membrane passes run 72–92 (SLLF…IQYI), 110–130 (TSLN…VMLA), 154–174 (VLIS…CWTL), 182–202 (SVLN…LCCF), 287–307 (EVLF…LCFV), 319–339 (CEHL…QLLP), 420–440 (LLNL…YSLL), and 446–466 (NHTL…FKLL).

It belongs to the TMEM39 family. As to quaternary structure, interacts with SACM1L, SEC23A and SEC24A. In terms of assembly, (Microbial infection) Interacts with encephalomyocarditis virus (EMCV) major capsid proteins VP1 and VP2. Up-regulated in brain tumor glioblastoma multiforme cells (at protein level).

It localises to the endoplasmic reticulum membrane. Regulates autophagy by controlling the spatial distribution and levels of the intracellular phosphatidylinositol 4-phosphate (PtdIns(4)P) pools. Modulates (PtdIns(4)P) levels by regulating the ER-to-Golgi trafficking of the phosphatidylinositide phosphatase SACM1L. In terms of biological role, (Microbial infection) Positively regulates the replication of encephalomyocarditis virus (EMCV) via autophagy-dependent pathway. In Homo sapiens (Human), this protein is Transmembrane protein 39A (TMEM39A).